We begin with the raw amino-acid sequence, 210 residues long: Viral protein 1 (210 aa).

The chain is Viral protein 1 from Chaetoceros (Chaetoceros sp. DNA virus 7).